The sequence spans 273 residues: Large ribosomal subunit protein uL29m (273 aa).

Residues P247 to E258 show a composition bias toward basic and acidic residues. The disordered stretch occupies residues P247–N273.

The protein belongs to the universal ribosomal protein uL29 family. In terms of assembly, component of the mitochondrial large ribosomal subunit. Mature mitochondrial ribosomes consist of a small (37S) and a large (54S) subunit. The 37S subunit contains at least 33 different proteins and 1 molecule of RNA (15S). The 54S subunit contains at least 45 different proteins and 1 molecule of RNA (21S).

The protein localises to the mitochondrion. This is Large ribosomal subunit protein uL29m (mrpl4) from Aspergillus niger (strain ATCC MYA-4892 / CBS 513.88 / FGSC A1513).